Reading from the N-terminus, the 362-residue chain is NAD(P)H-quinone oxidoreductase subunit 1, chloroplastic (362 aa).

8 helical membrane passes run 27-47 (IWIL…LVIV), 94-114 (IPLF…SFLV), 128-148 (IGVF…LMAG), 164-184 (AAQS…ISLL), 202-222 (FFGW…ISSL), 247-267 (YSGI…LVSS), 303-323 (TMSI…SITI), and 335-355 (LLNL…LLTT).

It belongs to the complex I subunit 1 family. As to quaternary structure, NDH is composed of at least 16 different subunits, 5 of which are encoded in the nucleus.

It is found in the plastid. The protein localises to the chloroplast thylakoid membrane. It carries out the reaction a plastoquinone + NADH + (n+1) H(+)(in) = a plastoquinol + NAD(+) + n H(+)(out). The enzyme catalyses a plastoquinone + NADPH + (n+1) H(+)(in) = a plastoquinol + NADP(+) + n H(+)(out). In terms of biological role, NDH shuttles electrons from NAD(P)H:plastoquinone, via FMN and iron-sulfur (Fe-S) centers, to quinones in the photosynthetic chain and possibly in a chloroplast respiratory chain. The immediate electron acceptor for the enzyme in this species is believed to be plastoquinone. Couples the redox reaction to proton translocation, and thus conserves the redox energy in a proton gradient. The protein is NAD(P)H-quinone oxidoreductase subunit 1, chloroplastic (ndhA) of Oryza sativa (Rice).